Here is a 533-residue protein sequence, read N- to C-terminus: DEAD-box ATP-dependent RNA helicase CshA (533 aa).

Residues 2 to 30 carry the Q motif motif; the sequence is TTFRELGLSDSLLQSVESMGFEEATPIQA. One can recognise a Helicase ATP-binding domain in the interval 33–203; that stretch reads IPHALQGKDI…ERFMTEPQHI (171 aa). 46 to 53 is an ATP binding site; that stretch reads AQTGTGKT. Residues 151–154 carry the DEAD box motif; that stretch reads DEAD. Residues 214–374 form the Helicase C-terminal domain; it reads NIQQFYLEVQ…RMDAPTLDEA (161 aa). A disordered region spans residues 428–533; it reads TTPIALTSEP…ERKHHSRPQA (106 aa). Residues 458–512 are compositionally biased toward basic and acidic residues; it reads DGNRNRSRDGRGGGDGRNRDRNRDGRNRDGNRDRNRDGNRDRNRDGGSRGRRGEG. Residues 524–533 are compositionally biased toward basic residues; the sequence is ERKHHSRPQA.

This sequence belongs to the DEAD box helicase family. CshA subfamily. As to quaternary structure, oligomerizes, may be a member of the RNA degradosome.

Its subcellular location is the cytoplasm. It catalyses the reaction ATP + H2O = ADP + phosphate + H(+). DEAD-box RNA helicase possibly involved in RNA degradation. May work in conjunction with the cold shock proteins to ensure proper initiation of transcription at low and optimal temperatures. Unwinds dsRNA in both 5'- and 3'-directions and shows RNA-dependent ATPase activity. Probably has a somewhat redundant function with cshB, as cshA can partially complement the growth effects of a cshB deletion. Plays a role in adaptation to cold, oxididant and pH stress. The sequence is that of DEAD-box ATP-dependent RNA helicase CshA from Bacillus cereus (strain ATCC 14579 / DSM 31 / CCUG 7414 / JCM 2152 / NBRC 15305 / NCIMB 9373 / NCTC 2599 / NRRL B-3711).